Reading from the N-terminus, the 309-residue chain is Shugoshin (309 aa).

Residues 42–77 are a coiled coil; the sequence is NLLLKQQVVQCTKTIEKLRNENVALRQKNQELIDGT. 2 disordered regions span residues 165-195 and 210-309; these read FDNN…KGRR and EEAS…NTFF. Residues 167-178 are compositionally biased toward low complexity; it reads NNSSQSTSSIQN. Residues 184–193 are compositionally biased toward basic residues; it reads PRKKQSVGKG.

The protein belongs to the shugoshin family. As to expression, expressed in gonads.

It is found in the nucleus. Its subcellular location is the chromosome. It localises to the centromere. Component of cell cycle checkpoints, which ensures chromosome segregation during meiosis and mitosis. During meiotic prophase, it is involved in the regulation of the synapsis checkpoint, which monitors whether homologous chromosomes have synapsed, and the DNA damage response. Plays a central role in chromosome cohesion during cell division by preventing premature dissociation of cohesin complex after prophase, when most of cohesin complex dissociates from chromosomes arms. This Caenorhabditis elegans protein is Shugoshin.